We begin with the raw amino-acid sequence, 71 residues long: Conotoxin Ca5.1 (71 aa).

Residues 1–19 form the signal peptide; that stretch reads MRCVPVFIILLLLASPAAS. Positions 20-56 are excised as a propeptide; sequence DPLEKRIQSDLIRAALEDADTKNDPRILEDIVSTALA.

The protein belongs to the conotoxin T superfamily. Post-translationally, contains 2 disulfide bonds that can be either 'C1-C3, C2-C4' or 'C1-C4, C2-C3', since these disulfide connectivities have been observed for conotoxins with cysteine framework V (for examples, see AC P0DQQ7 and AC P81755). Expressed by the venom duct.

The protein localises to the secreted. This Conus caracteristicus (Characteristic cone) protein is Conotoxin Ca5.1.